The primary structure comprises 311 residues: Cbb3-type cytochrome c oxidase subunit CcoP1 (311 aa).

The next 2 helical transmembrane spans lie at 4 to 24 (FWSG…FWLI) and 56 to 76 (RWWF…LVLY). Cytochrome c domains lie at 130–209 (QAVK…RKDL) and 220–302 (ADLS…YSLS). Heme c contacts are provided by cysteine 143, cysteine 146, histidine 147, methionine 186, cysteine 233, cysteine 236, histidine 237, and methionine 279.

Belongs to the CcoP / FixP family. In terms of assembly, component of the cbb3-type cytochrome c oxidase at least composed of CcoN, CcoO, CcoQ and CcoP. Heme c serves as cofactor.

The protein resides in the cell inner membrane. Its pathway is energy metabolism; oxidative phosphorylation. Its function is as follows. C-type cytochrome. Part of the cbb3-type cytochrome c oxidase complex. CcoP subunit is required for transferring electrons from donor cytochrome c via its heme groups to CcoO subunit. From there, electrons are shuttled to the catalytic binuclear center of CcoN subunit where oxygen reduction takes place. The complex also functions as a proton pump. This chain is Cbb3-type cytochrome c oxidase subunit CcoP1, found in Stutzerimonas stutzeri (Pseudomonas stutzeri).